The following is a 237-amino-acid chain: Uridylate kinase (237 aa).

11–14 (KLSG) lines the ATP pocket. Residue Gly53 coordinates UMP. ATP is bound by residues Gly54 and Arg58. UMP is bound by residues Asp73 and 134 to 141 (TGNPFFTT). 3 residues coordinate ATP: Thr161, Tyr167, and Asp170.

It belongs to the UMP kinase family. Homohexamer.

The protein resides in the cytoplasm. The catalysed reaction is UMP + ATP = UDP + ADP. The protein operates within pyrimidine metabolism; CTP biosynthesis via de novo pathway; UDP from UMP (UMPK route): step 1/1. With respect to regulation, inhibited by UTP. Its function is as follows. Catalyzes the reversible phosphorylation of UMP to UDP. This is Uridylate kinase from Burkholderia ambifaria (strain ATCC BAA-244 / DSM 16087 / CCUG 44356 / LMG 19182 / AMMD) (Burkholderia cepacia (strain AMMD)).